The sequence spans 433 residues: Probable M18 family aminopeptidase 2 (433 aa).

The Zn(2+) site is built by His-79, His-153, and His-404.

This sequence belongs to the peptidase M18 family. It depends on Zn(2+) as a cofactor.

This Mycobacterium bovis (strain ATCC BAA-935 / AF2122/97) protein is Probable M18 family aminopeptidase 2 (apeB).